Here is a 427-residue protein sequence, read N- to C-terminus: Serine--tRNA ligase (427 aa).

L-serine is bound at residue 231–233 (TAE). 262-264 (RSE) serves as a coordination point for ATP. Glu285 contacts L-serine. 349 to 352 (EISS) contributes to the ATP binding site. Residue Ser385 coordinates L-serine.

The protein belongs to the class-II aminoacyl-tRNA synthetase family. Type-1 seryl-tRNA synthetase subfamily. Homodimer. The tRNA molecule binds across the dimer.

It is found in the cytoplasm. The enzyme catalyses tRNA(Ser) + L-serine + ATP = L-seryl-tRNA(Ser) + AMP + diphosphate + H(+). It catalyses the reaction tRNA(Sec) + L-serine + ATP = L-seryl-tRNA(Sec) + AMP + diphosphate + H(+). It participates in aminoacyl-tRNA biosynthesis; selenocysteinyl-tRNA(Sec) biosynthesis; L-seryl-tRNA(Sec) from L-serine and tRNA(Sec): step 1/1. In terms of biological role, catalyzes the attachment of serine to tRNA(Ser). Is also able to aminoacylate tRNA(Sec) with serine, to form the misacylated tRNA L-seryl-tRNA(Sec), which will be further converted into selenocysteinyl-tRNA(Sec). In Listeria innocua serovar 6a (strain ATCC BAA-680 / CLIP 11262), this protein is Serine--tRNA ligase.